The chain runs to 541 residues: Cyclin-T1-4 (541 aa).

A disordered region spans residues 277 to 366 (VSEVESSVGG…KSRSGVEAPG (90 aa)). Residues 307 to 325 (SDNLGGSTKATQNRSNDNG) show a composition bias toward polar residues. The segment covering 336 to 354 (QKGERDTETKDSMHTESHP) has biased composition (basic and acidic residues). S396 bears the Phosphoserine mark. Residues 445–541 (EDDKDIQNKS…REPRRHSQER (97 aa)) are disordered. The segment covering 493 to 511 (MESPCEKQLGEGKRRHDNS) has biased composition (basic and acidic residues). Residues 519-528 (KTNPGGSSHS) show a composition bias toward polar residues. Residues 529 to 541 (YGDREPRRHSQER) are compositionally biased toward basic and acidic residues.

Belongs to the cyclin family. Cyclin T subfamily.

The polypeptide is Cyclin-T1-4 (CYCT1-4) (Arabidopsis thaliana (Mouse-ear cress)).